The following is a 306-amino-acid chain: Homoserine kinase (306 aa).

84–94 (PAGLGLGSSGA) provides a ligand contact to ATP.

It belongs to the GHMP kinase family. Homoserine kinase subfamily.

It is found in the cytoplasm. It catalyses the reaction L-homoserine + ATP = O-phospho-L-homoserine + ADP + H(+). Its pathway is amino-acid biosynthesis; L-threonine biosynthesis; L-threonine from L-aspartate: step 4/5. In terms of biological role, catalyzes the ATP-dependent phosphorylation of L-homoserine to L-homoserine phosphate. The protein is Homoserine kinase of Sulfolobus acidocaldarius (strain ATCC 33909 / DSM 639 / JCM 8929 / NBRC 15157 / NCIMB 11770).